We begin with the raw amino-acid sequence, 634 residues long: DNA-directed RNA polymerase subunit gamma (634 aa).

The Zn(2+) site is built by cysteine 74, cysteine 76, cysteine 89, and cysteine 92. Mg(2+) is bound by residues aspartate 471, aspartate 473, and aspartate 475.

Belongs to the RNA polymerase beta' chain family. RpoC1 subfamily. In terms of assembly, in cyanobacteria the RNAP catalytic core is composed of 2 alpha, 1 beta, 1 beta', 1 gamma and 1 omega subunit. When a sigma factor is associated with the core the holoenzyme is formed, which can initiate transcription. Mg(2+) serves as cofactor. The cofactor is Zn(2+).

It catalyses the reaction RNA(n) + a ribonucleoside 5'-triphosphate = RNA(n+1) + diphosphate. DNA-dependent RNA polymerase catalyzes the transcription of DNA into RNA using the four ribonucleoside triphosphates as substrates. The chain is DNA-directed RNA polymerase subunit gamma from Prochlorococcus marinus (strain SARG / CCMP1375 / SS120).